The chain runs to 271 residues: Ribosomal RNA small subunit methyltransferase A (271 aa).

S-adenosyl-L-methionine-binding residues include His11, Leu13, Gly38, Glu58, Asp86, and Asn101.

Belongs to the class I-like SAM-binding methyltransferase superfamily. rRNA adenine N(6)-methyltransferase family. RsmA subfamily.

It is found in the cytoplasm. The enzyme catalyses adenosine(1518)/adenosine(1519) in 16S rRNA + 4 S-adenosyl-L-methionine = N(6)-dimethyladenosine(1518)/N(6)-dimethyladenosine(1519) in 16S rRNA + 4 S-adenosyl-L-homocysteine + 4 H(+). Specifically dimethylates two adjacent adenosines (A1518 and A1519) in the loop of a conserved hairpin near the 3'-end of 16S rRNA in the 30S particle. May play a critical role in biogenesis of 30S subunits. The chain is Ribosomal RNA small subunit methyltransferase A from Helicobacter pylori (strain HPAG1).